We begin with the raw amino-acid sequence, 333 residues long: Glyceraldehyde-3-phosphate dehydrogenase (333 aa).

Residues 11–12, aspartate 35, methionine 79, and serine 121 each bind NAD(+); that span reads RI. Residues 150 to 152, threonine 181, 210 to 211, and arginine 233 contribute to the D-glyceraldehyde 3-phosphate site; these read SCT and TG. The active-site Nucleophile is the cysteine 151. Residue asparagine 315 participates in NAD(+) binding.

This sequence belongs to the glyceraldehyde-3-phosphate dehydrogenase family. In terms of assembly, homotetramer.

The protein resides in the cytoplasm. It catalyses the reaction D-glyceraldehyde 3-phosphate + phosphate + NAD(+) = (2R)-3-phospho-glyceroyl phosphate + NADH + H(+). It participates in carbohydrate degradation; glycolysis; pyruvate from D-glyceraldehyde 3-phosphate: step 1/5. In terms of biological role, catalyzes the oxidative phosphorylation of glyceraldehyde 3-phosphate (G3P) to 1,3-bisphosphoglycerate (BPG) using the cofactor NAD. The first reaction step involves the formation of a hemiacetal intermediate between G3P and a cysteine residue, and this hemiacetal intermediate is then oxidized to a thioester, with concomitant reduction of NAD to NADH. The reduced NADH is then exchanged with the second NAD, and the thioester is attacked by a nucleophilic inorganic phosphate to produce BPG. This is Glyceraldehyde-3-phosphate dehydrogenase (gap) from Bacteroides fragilis (strain YCH46).